The chain runs to 315 residues: Olfactory receptor 3A1 (315 aa).

Residues 1 to 28 lie on the Extracellular side of the membrane; the sequence is MQPESGANGTVIAEFILLGLLEAPGLQP. N-linked (GlcNAc...) asparagine glycosylation is present at Asn8. A helical membrane pass occupies residues 29-52; that stretch reads VVFVLFLFAYLVTVGGNLSILAAV. At 53–60 the chain is on the cytoplasmic side; sequence LVEPELHT. The chain crosses the membrane as a helical span at residues 61 to 82; that stretch reads PMYFFLGNLSVLDVGCISVTVP. Topologically, residues 83–103 are extracellular; the sequence is SMLSRLLSRKRAVPCGACLTQ. A disulfide bridge links Cys100 with Cys192. The chain crosses the membrane as a helical span at residues 104–123; the sequence is LFFFHLFVGVDCFLLIAMAY. Residues 124–143 are Cytoplasmic-facing; the sequence is DRFLAICRPLTYSTRMSQTV. Residues 144–161 form a helical membrane-spanning segment; sequence QRMLVAASWACAFTNALT. The Extracellular segment spans residues 162–199; sequence HTVAMSTLNFCGPNVINHFYCDLPQLCQLSCSSTQLSE. Residues 200–223 form a helical membrane-spanning segment; that stretch reads LLLFAVGFIMAGTSMALIVISYIH. Over 224–240 the chain is Cytoplasmic; that stretch reads VAAAVLRIRSVEGRKKA. The chain crosses the membrane as a helical span at residues 241 to 264; that stretch reads FSTCGSHLTVVAIFYGSGIFNYMR. Over 265–275 the chain is Extracellular; it reads LGSTKLSDKDK. Residues 276-295 traverse the membrane as a helical segment; that stretch reads AVGIFNTVINPMLNPIIYSF. At 296 to 315 the chain is on the cytoplasmic side; that stretch reads RNPDVQSAIWRMLTGRRSLA.

Belongs to the G-protein coupled receptor 1 family.

Its subcellular location is the cell membrane. Odorant receptor. The polypeptide is Olfactory receptor 3A1 (OR3A1) (Gorilla gorilla gorilla (Western lowland gorilla)).